Consider the following 455-residue polypeptide: P2X purinoceptor 5 (455 aa).

At 1 to 34 (MGQAAWKGFVLSLFDYKTAKFVVAKSKKVGLLYR) the chain is on the cytoplasmic side. Residues 35–55 (VLQLIILLYLLIWVFLIKKSY) form a helical membrane-spanning segment. The Extracellular portion of the chain corresponds to 56–341 (QDIDTSLQSA…SIIPTVINIG (286 aa)). 2 residues coordinate ATP: Lys69 and Lys71. N-linked (GlcNAc...) asparagine glycosylation is present at Asn77. Intrachain disulfides connect Cys118–Cys169, Cys129–Cys152, and Cys135–Cys163. N-linked (GlcNAc...) asparagine glycosylation is present at Asn157. Residue Thr189 participates in ATP binding. Residue Asn202 is glycosylated (N-linked (GlcNAc...) asparagine). 2 cysteine pairs are disulfide-bonded: Cys220-Cys229 and Cys263-Cys272. Asn294, Arg296, and Lys314 together coordinate ATP. A helical membrane pass occupies residues 342–362 (SGLALMGAGAFFCDLVLIYLI). Residues 363-455 (RKSEFYRDKK…QSQILHPVKT (93 aa)) lie on the Cytoplasmic side of the membrane. Positions 384-401 (NVEVEANEMEQERPEDEP) are enriched in acidic residues. Positions 384-422 (NVEVEANEMEQERPEDEPLERVRQDEQSQELAQSGRKQN) are disordered. Residues 412–422 (QELAQSGRKQN) show a composition bias toward polar residues.

It belongs to the P2X receptor family. Functional P2XRs are organized as homomeric and heteromeric trimers. Homotrimer. Forms heterotrimer with P2RX1. Predominantly expressed in heart but are also present in brain, spinal cord and adrenal gland.

It is found in the cell membrane. The enzyme catalyses Na(+)(in) = Na(+)(out). It carries out the reaction Ca(2+)(in) = Ca(2+)(out). It catalyses the reaction chloride(in) = chloride(out). With respect to regulation, activated by ATP. Slowly desensitizing. Not activated by ATP agonist alpha/beta-methylene-ATP. Highly sensitive to the antagonists suramin and PPADS. ATP-gated nonselective transmembrane cation channel. Permeable to potassium, sodium and calcium. Unlike other P2RX receptors, the P2X5 receptor is also permeable to chloride. Acts as an important regulator of inflammatory-related bone loss and osteoclast multinucleation. This is P2X purinoceptor 5 (P2rx5) from Rattus norvegicus (Rat).